We begin with the raw amino-acid sequence, 186 residues long: Large ribosomal subunit protein uL10 (186 aa).

Part of the ribosomal stalk of the 50S ribosomal subunit. The N-terminus interacts with L11 and the large rRNA to form the base of the stalk. The C-terminus forms an elongated spine to which L12 dimers bind in a sequential fashion forming a multimeric L10(L12)X complex.

In terms of biological role, forms part of the ribosomal stalk, playing a central role in the interaction of the ribosome with GTP-bound translation factors. This chain is Large ribosomal subunit protein uL10, found in Rhodopseudomonas palustris (strain ATCC BAA-98 / CGA009).